We begin with the raw amino-acid sequence, 400 residues long: Iron(III) enterobactin esterase (400 aa).

The protein belongs to the Fes family. Monomer.

The protein resides in the cytoplasm. It carries out the reaction Fe(III)-enterobactin + 3 H2O + H(+) = Fe(III)-[N-(2,3-dihydroxybenzoyl)-L-serine] + 2 N-(2,3-dihydroxybenzoyl)-L-serine. The catalysed reaction is Fe(III)-enterobactin + H2O = Fe(III)-[N-(2,3-dihydroxybenzoyl)-L-serine]3 + H(+). The enzyme catalyses Fe(III)-[N-(2,3-dihydroxybenzoyl)-L-serine]3 + H2O + H(+) = Fe(III)-[N-(2,3-dihydroxybenzoyl)-L-serine]2 + N-(2,3-dihydroxybenzoyl)-L-serine. It catalyses the reaction Fe(III)-[N-(2,3-dihydroxybenzoyl)-L-serine]2 + H2O + H(+) = Fe(III)-[N-(2,3-dihydroxybenzoyl)-L-serine] + N-(2,3-dihydroxybenzoyl)-L-serine. It carries out the reaction enterobactin + 3 H2O = 3 N-(2,3-dihydroxybenzoyl)-L-serine + 2 H(+). With respect to regulation, inhibited by N-ethylmaleimide. In terms of biological role, catalyzes the hydrolysis of ferric enterobactin (Fe-Ent). Is responsible for the release of iron from ferric enterobactin. Also catalyzes the hydrolysis of iron-free enterobactin (Ent). Cleavage of ferric enterobactin results in a mixture of three hydrolysis products, 2,3-dihydroxybenzoylserine (DHBS), the linear dimer (DHBS)2 and the linear trimer (DHBS)3, while cleavage of iron-free enterobactin yields only the monomer. Hydrolysis of ferric enterobactin is less efficient than hydrolysis of unliganded enterobactin. It also cleaves the aluminum (III) complex at a rate similar to the ferric complex. This chain is Iron(III) enterobactin esterase, found in Escherichia coli (strain K12).